A 129-amino-acid chain; its full sequence is Small ribosomal subunit protein uS11 (129 aa).

Part of the 30S ribosomal subunit. Interacts with proteins S7 and S18. Binds to IF-3. Post-translationally, may be methylated on an undetermined residue.

Functionally, located on the platform of the 30S subunit, it bridges several disparate RNA helices of the 16S rRNA. Forms part of the Shine-Dalgarno cleft in the 70S ribosome. The chain is Small ribosomal subunit protein uS11 from Rhodopseudomonas palustris (strain ATCC BAA-98 / CGA009).